A 276-amino-acid polypeptide reads, in one-letter code: Adenylyl-sulfate kinase 1, chloroplastic (276 aa).

The transit peptide at 1 to 38 directs the protein to the chloroplast; sequence MIAAGAKSLLGLSMASPKGIFDSNSMSNSRSVVVVRAC. The segment at 46 to 74 is disordered; sequence TLSHNKNGSIPEVKSINGHTGQKQGPLST. A compositionally biased stretch (polar residues) spans 62 to 74; the sequence is NGHTGQKQGPLST. 108 to 116 contacts ATP; the sequence is GLSGSGKST. Residues Asp-138, Arg-141, Arg-155, Asn-158, 181–182, and Gly-231 contribute to the substrate site; that span reads IS. Ser-182 (phosphoserine intermediate) is an active-site residue.

It belongs to the APS kinase family. As to quaternary structure, homodimer; disulfide-linked. Interacts with APK2. In terms of tissue distribution, expressed in root vasculature, root tips, leaf epidermal and guard cells, pollen grains and funiculus of developing seeds.

It localises to the plastid. Its subcellular location is the chloroplast. The enzyme catalyses adenosine 5'-phosphosulfate + ATP = 3'-phosphoadenylyl sulfate + ADP + H(+). The protein operates within sulfur metabolism; hydrogen sulfide biosynthesis; sulfite from sulfate: step 2/3. In terms of biological role, catalyzes the synthesis of activated sulfate. Essential for plant reproduction and viability. Required for the production of glucosinolates. This is Adenylyl-sulfate kinase 1, chloroplastic (APK1) from Arabidopsis thaliana (Mouse-ear cress).